The chain runs to 189 residues: Putative nucleotidase BC_3386 (189 aa).

The protein belongs to the 5'(3')-deoxyribonucleotidase family.

This is Putative nucleotidase BC_3386 from Bacillus cereus (strain ATCC 14579 / DSM 31 / CCUG 7414 / JCM 2152 / NBRC 15305 / NCIMB 9373 / NCTC 2599 / NRRL B-3711).